The following is a 331-amino-acid chain: Adenosine deaminase (331 aa).

The Zn(2+) site is built by histidine 12 and histidine 14. Substrate contacts are provided by histidine 14, aspartate 16, and glycine 170. Histidine 197 serves as a coordination point for Zn(2+). The active-site Proton donor is the glutamate 200. Aspartate 278 provides a ligand contact to Zn(2+). Aspartate 279 contributes to the substrate binding site.

This sequence belongs to the metallo-dependent hydrolases superfamily. Adenosine and AMP deaminases family. Adenosine deaminase subfamily. Zn(2+) is required as a cofactor.

It catalyses the reaction adenosine + H2O + H(+) = inosine + NH4(+). It carries out the reaction 2'-deoxyadenosine + H2O + H(+) = 2'-deoxyinosine + NH4(+). Functionally, catalyzes the hydrolytic deamination of adenosine and 2-deoxyadenosine. The protein is Adenosine deaminase of Shewanella oneidensis (strain ATCC 700550 / JCM 31522 / CIP 106686 / LMG 19005 / NCIMB 14063 / MR-1).